The sequence spans 223 residues: Phosphoribosylformylglycinamidine synthase subunit PurQ (223 aa).

In terms of domain architecture, Glutamine amidotransferase type-1 spans 4-223 (FAVVVFPGTN…FKGMVEWVRS (220 aa)). Cysteine 85 serves as the catalytic Nucleophile. Residues histidine 196 and glutamate 198 contribute to the active site.

In terms of assembly, part of the FGAM synthase complex composed of 1 PurL, 1 PurQ and 2 PurS subunits.

Its subcellular location is the cytoplasm. The catalysed reaction is N(2)-formyl-N(1)-(5-phospho-beta-D-ribosyl)glycinamide + L-glutamine + ATP + H2O = 2-formamido-N(1)-(5-O-phospho-beta-D-ribosyl)acetamidine + L-glutamate + ADP + phosphate + H(+). It carries out the reaction L-glutamine + H2O = L-glutamate + NH4(+). Its pathway is purine metabolism; IMP biosynthesis via de novo pathway; 5-amino-1-(5-phospho-D-ribosyl)imidazole from N(2)-formyl-N(1)-(5-phospho-D-ribosyl)glycinamide: step 1/2. Its function is as follows. Part of the phosphoribosylformylglycinamidine synthase complex involved in the purines biosynthetic pathway. Catalyzes the ATP-dependent conversion of formylglycinamide ribonucleotide (FGAR) and glutamine to yield formylglycinamidine ribonucleotide (FGAM) and glutamate. The FGAM synthase complex is composed of three subunits. PurQ produces an ammonia molecule by converting glutamine to glutamate. PurL transfers the ammonia molecule to FGAR to form FGAM in an ATP-dependent manner. PurS interacts with PurQ and PurL and is thought to assist in the transfer of the ammonia molecule from PurQ to PurL. This chain is Phosphoribosylformylglycinamidine synthase subunit PurQ, found in Pyrococcus furiosus (strain ATCC 43587 / DSM 3638 / JCM 8422 / Vc1).